The chain runs to 276 residues: Putative pyruvate, phosphate dikinase regulatory protein (276 aa).

Residue 151–158 (GISRTSKT) coordinates ADP.

Belongs to the pyruvate, phosphate/water dikinase regulatory protein family. PDRP subfamily.

It carries out the reaction N(tele)-phospho-L-histidyl/L-threonyl-[pyruvate, phosphate dikinase] + ADP = N(tele)-phospho-L-histidyl/O-phospho-L-threonyl-[pyruvate, phosphate dikinase] + AMP + H(+). The catalysed reaction is N(tele)-phospho-L-histidyl/O-phospho-L-threonyl-[pyruvate, phosphate dikinase] + phosphate + H(+) = N(tele)-phospho-L-histidyl/L-threonyl-[pyruvate, phosphate dikinase] + diphosphate. Functionally, bifunctional serine/threonine kinase and phosphorylase involved in the regulation of the pyruvate, phosphate dikinase (PPDK) by catalyzing its phosphorylation/dephosphorylation. The polypeptide is Putative pyruvate, phosphate dikinase regulatory protein (Streptococcus agalactiae serotype Ia (strain ATCC 27591 / A909 / CDC SS700)).